The following is a 226-amino-acid chain: Enolase-phosphatase E1 (226 aa).

It belongs to the HAD-like hydrolase superfamily. MasA/MtnC family. Monomer. It depends on Mg(2+) as a cofactor.

It carries out the reaction 5-methylsulfanyl-2,3-dioxopentyl phosphate + H2O = 1,2-dihydroxy-5-(methylsulfanyl)pent-1-en-3-one + phosphate. It functions in the pathway amino-acid biosynthesis; L-methionine biosynthesis via salvage pathway; L-methionine from S-methyl-5-thio-alpha-D-ribose 1-phosphate: step 3/6. It participates in amino-acid biosynthesis; L-methionine biosynthesis via salvage pathway; L-methionine from S-methyl-5-thio-alpha-D-ribose 1-phosphate: step 4/6. In terms of biological role, bifunctional enzyme that catalyzes the enolization of 2,3-diketo-5-methylthiopentyl-1-phosphate (DK-MTP-1-P) into the intermediate 2-hydroxy-3-keto-5-methylthiopentenyl-1-phosphate (HK-MTPenyl-1-P), which is then dephosphorylated to form the acireductone 1,2-dihydroxy-3-keto-5-methylthiopentene (DHK-MTPene). This is Enolase-phosphatase E1 from Shewanella putrefaciens (strain CN-32 / ATCC BAA-453).